Here is a 124-residue protein sequence, read N- to C-terminus: Small ribosomal subunit protein uS13 (124 aa).

The tract at residues 99–124 (RGQRTRTNARTRKGPRKTVGVMRKKS) is disordered. Positions 101–124 (QRTRTNARTRKGPRKTVGVMRKKS) are enriched in basic residues.

It belongs to the universal ribosomal protein uS13 family. In terms of assembly, part of the 30S ribosomal subunit. Forms a loose heterodimer with protein S19. Forms two bridges to the 50S subunit in the 70S ribosome.

Functionally, located at the top of the head of the 30S subunit, it contacts several helices of the 16S rRNA. In the 70S ribosome it contacts the 23S rRNA (bridge B1a) and protein L5 of the 50S subunit (bridge B1b), connecting the 2 subunits; these bridges are implicated in subunit movement. Contacts the tRNAs in the A and P-sites. The chain is Small ribosomal subunit protein uS13 from Caldicellulosiruptor bescii (strain ATCC BAA-1888 / DSM 6725 / KCTC 15123 / Z-1320) (Anaerocellum thermophilum).